A 469-amino-acid chain; its full sequence is Trehalose-6-phosphate synthase (469 aa).

Residue Arg-10 participates in D-glucose 6-phosphate binding. 22-23 (GG) provides a ligand contact to UDP-alpha-D-glucose. Tyr-77 and Asp-131 together coordinate D-glucose 6-phosphate. Residues Arg-262 and Lys-267 each coordinate UDP-alpha-D-glucose. Position 300 (Arg-300) interacts with D-glucose 6-phosphate. 365–369 (LVAKE) contributes to the UDP-alpha-D-glucose binding site.

The protein belongs to the glycosyltransferase 20 family. In terms of assembly, homotetramer.

The catalysed reaction is D-glucose 6-phosphate + UDP-alpha-D-glucose = alpha,alpha-trehalose 6-phosphate + UDP + H(+). The protein operates within glycan biosynthesis; trehalose biosynthesis. Probably involved in the osmoprotection via the biosynthesis of trehalose. Catalyzes the transfer of glucose from UDP-alpha-D-glucose (UDP-Glc) to D-glucose 6-phosphate (Glc-6-P) to form trehalose-6-phosphate. Acts with retention of the anomeric configuration of the UDP-sugar donor. This Sodalis glossinidius (strain morsitans) protein is Trehalose-6-phosphate synthase.